We begin with the raw amino-acid sequence, 308 residues long: Carbonic anhydrase 4 (308 aa).

The N-terminal stretch at 1–18 is a signal peptide; it reads MQLLFALLALGALRPLAG. Residues 21–281 form the Alpha-carbonic anhydrase domain; it reads LHWCYEIQAS…LGDRSVFKSQ (261 aa). 2 disulfide bridges follow: cysteine 24–cysteine 34 and cysteine 44–cysteine 225. A glycan (N-linked (GlcNAc...) asparagine) is linked at asparagine 31. The Proton donor/acceptor role is filled by histidine 86. Zn(2+)-binding residues include histidine 113, histidine 115, and histidine 138. The N-linked (GlcNAc...) asparagine glycan is linked to asparagine 192. Position 221–222 (221–222) interacts with substrate; that stretch reads TT. The GPI-anchor amidated serine moiety is linked to residue serine 280. Residues 281–308 constitute a propeptide, removed in mature form; it reads QAAGQLLPLPLPTLLVPTLACVMAGLLR.

It belongs to the alpha-carbonic anhydrase family. In terms of assembly, interacts with SLC4A4. Zn(2+) serves as cofactor.

The protein resides in the cell membrane. It carries out the reaction hydrogencarbonate + H(+) = CO2 + H2O. With respect to regulation, inhibited by acetazolamide. Functionally, catalyzes the reversible hydration of carbon dioxide into bicarbonate and protons and thus is essential to maintaining intracellular and extracellular pH. May stimulate the sodium/bicarbonate transporter activity of SLC4A4 that acts in pH homeostasis. It is essential for acid overload removal from the retina and retina epithelium, and acid release in the choriocapillaris in the choroid. This is Carbonic anhydrase 4 (CA4) from Oryctolagus cuniculus (Rabbit).